Here is a 475-residue protein sequence, read N- to C-terminus: Ribulose bisphosphate carboxylase large chain (475 aa).

Residues 1-2 (MV) constitute a propeptide that is removed on maturation. At Pro3 the chain carries N-acetylproline. N6,N6,N6-trimethyllysine is present on Lys14. 2 residues coordinate substrate: Asn123 and Thr173. The Proton acceptor role is filled by Lys175. Residue Lys177 coordinates substrate. 3 residues coordinate Mg(2+): Lys201, Asp203, and Glu204. The residue at position 201 (Lys201) is an N6-carboxylysine. The active-site Proton acceptor is His294. Arg295, His327, and Ser379 together coordinate substrate.

This sequence belongs to the RuBisCO large chain family. Type I subfamily. In terms of assembly, heterohexadecamer of 8 large chains and 8 small chains. Requires Mg(2+) as cofactor.

Its subcellular location is the plastid. It localises to the chloroplast. It catalyses the reaction 2 (2R)-3-phosphoglycerate + 2 H(+) = D-ribulose 1,5-bisphosphate + CO2 + H2O. The catalysed reaction is D-ribulose 1,5-bisphosphate + O2 = 2-phosphoglycolate + (2R)-3-phosphoglycerate + 2 H(+). Functionally, ruBisCO catalyzes two reactions: the carboxylation of D-ribulose 1,5-bisphosphate, the primary event in carbon dioxide fixation, as well as the oxidative fragmentation of the pentose substrate in the photorespiration process. Both reactions occur simultaneously and in competition at the same active site. This chain is Ribulose bisphosphate carboxylase large chain, found in Chlamydomonas moewusii (Chlamydomonas eugametos).